We begin with the raw amino-acid sequence, 412 residues long: Serine hydroxymethyltransferase (412 aa).

Residues leucine 117 and 121–123 (GHL) contribute to the (6S)-5,6,7,8-tetrahydrofolate site. N6-(pyridoxal phosphate)lysine is present on lysine 226. 349-351 (SPF) is a (6S)-5,6,7,8-tetrahydrofolate binding site.

Belongs to the SHMT family. Homodimer. The cofactor is pyridoxal 5'-phosphate.

Its subcellular location is the cytoplasm. It carries out the reaction (6R)-5,10-methylene-5,6,7,8-tetrahydrofolate + glycine + H2O = (6S)-5,6,7,8-tetrahydrofolate + L-serine. The protein operates within one-carbon metabolism; tetrahydrofolate interconversion. It participates in amino-acid biosynthesis; glycine biosynthesis; glycine from L-serine: step 1/1. Catalyzes the reversible interconversion of serine and glycine with tetrahydrofolate (THF) serving as the one-carbon carrier. This reaction serves as the major source of one-carbon groups required for the biosynthesis of purines, thymidylate, methionine, and other important biomolecules. Also exhibits THF-independent aldolase activity toward beta-hydroxyamino acids, producing glycine and aldehydes, via a retro-aldol mechanism. The polypeptide is Serine hydroxymethyltransferase (Halothermothrix orenii (strain H 168 / OCM 544 / DSM 9562)).